The primary structure comprises 356 residues: Transcription factor MafB (356 aa).

Disordered stretches follow at residues 49 to 79 (RLQPQGSVSSTPISTPCSSVPSSPSFSPTEQ) and 140 to 240 (YRGA…LNVE). The segment covering 55 to 77 (SVSSTPISTPCSSVPSSPSFSPT) has biased composition (low complexity). 2 stretches are compositionally biased toward basic residues: residues 183–196 (AHGHHPHHHHHHHH) and 212–223 (HHRHHHHHHPHG). Residues 270–295 (RLKQKRRTLKNRGYAQSCRFKRVQQK) form a basic motif region. The bZIP domain maps to 270–333 (RLKQKRRTLK…DAYKLKCEKL (64 aa)). Residues 298-319 (LENEKTQLINQVEQLKQEINRL) are leucine-zipper.

It belongs to the bZIP family. Maf subfamily. In terms of assembly, homodimer or heterodimer with other bHLH-Zip transcription factors. Binds DNA as a homodimer or a heterodimer.

The protein localises to the nucleus. Functionally, may act as a transcriptional activator or repressor. Involved in neurogenesis. Involved in the development of rhombomeres (r) 5 and 6 segments from their common precursor 'proto-segment' in the hindbrain. This Danio rerio (Zebrafish) protein is Transcription factor MafB (mafb).